The sequence spans 339 residues: Alpha-N-dichloroacetyl-p-aminophenylserinol N-oxygenase (339 aa).

Residues 1-19 (MRDHTDEKSEAAGNDDGHV) are compositionally biased toward basic and acidic residues. A disordered region spans residues 1–22 (MRDHTDEKSEAAGNDDGHVRIG). Fe cation is bound by residues Glu-109, Glu-144, His-147, Glu-205, His-232, Glu-236, and His-239.

This sequence belongs to the AurF N-oxygenase family. Fe(2+) serves as cofactor.

It catalyses the reaction alpha-N-dichloroacetyl-p-aminophenylserinol + AH2 + 2 O2 = chloramphenicol + A + 2 H2O. It functions in the pathway antibiotic biosynthesis. Functionally, involved in chloramphenicol biosynthesis. Catalyzes the six-electron oxidation of an aryl-amine precursor of chloramphenicol (NH2-CAM) to yield the aryl-nitro group of chloramphenicol (CAM). During catalysis, upon exposure of the diferrous cluster to O(2), ClmI forms an exceptionally long-lived peroxo intermediate (CmlI-peroxo), which reacts with NH2-CAM to form CAM. This chain is Alpha-N-dichloroacetyl-p-aminophenylserinol N-oxygenase, found in Streptomyces venezuelae (strain ATCC 10712 / CBS 650.69 / DSM 40230 / JCM 4526 / NBRC 13096 / PD 04745).